The chain runs to 449 residues: Myb family transcription factor PHL6 (449 aa).

Residues 49–72 (PFIRSQSPDSPGQLWPKNSSQSTF) form a disordered region. The 61-residue stretch at 238-298 (ANQKSRMRWT…HLQKYRLAKY (61 aa)) folds into the HTH myb-type domain. The segment at residues 269–294 (PKAVKKLMNVEGLTIYHVKSHLQKYR) is a DNA-binding region (H-T-H motif). The segment at 301 to 327 (EKKEEKRTDNSEEKKLALSKSEADEKK) is disordered. The interval 334–354 (TEALRMQMEVQKQLHEQLEVQ) is coiled coil. The LHEQLE signature appears at 347-352 (LHEQLE). The interval 376 to 449 (RKTGRWISSS…NIAESEDPKR (74 aa)) is disordered. Polar residues predominate over residues 381-410 (WISSSSQTVLSPSDDSIPDSQNMSKTKASS).

It belongs to the MYB-CC family.

The protein resides in the nucleus. This is Myb family transcription factor PHL6 from Arabidopsis thaliana (Mouse-ear cress).